Consider the following 833-residue polypeptide: Serine-rich coiled-coil domain-containing protein 2 (833 aa).

The interval 178 to 208 (NRSSGNVQKPRVNSCASRSSSGESLAQSPDN) is disordered. Over residues 191-208 (SCASRSSSGESLAQSPDN) the composition is skewed to polar residues. Position 222 is a phosphoserine (serine 222). Disordered stretches follow at residues 321-345 (LLKS…PADM), 424-452 (NRTR…FDSP), 478-508 (KHTS…SSDG), and 602-631 (DHYH…ESPL). The residue at position 451 (serine 451) is a Phosphoserine. The segment covering 496 to 506 (SSFELSPSDSS) has biased composition (low complexity). Over residues 606 to 615 (LSHPGHYHHH) the composition is skewed to basic residues. Positions 711–747 (DQIYKNEDLLNEITQLKEEIKKKDEKIQLLEQQLATR) form a coiled coil. A disordered region spans residues 789-833 (FQGMPRTVPPHRRQTSSTTAFQQPSQIYRPRPGKTNKATTYRGPQ). A compositionally biased stretch (polar residues) spans 803–814 (TSSTTAFQQPSQ).

It belongs to the CCSER family. In terms of tissue distribution, expressed in brain (at protein level).

It is found in the cytoplasm. It localises to the cytoskeleton. Functionally, microtubule-binding protein which might play a role in microtubule bundling. The polypeptide is Serine-rich coiled-coil domain-containing protein 2 (Ccser2) (Mus musculus (Mouse)).